Here is a 420-residue protein sequence, read N- to C-terminus: ATP phosphoribosyltransferase regulatory subunit (420 aa).

Belongs to the class-II aminoacyl-tRNA synthetase family. HisZ subfamily. Heteromultimer composed of HisG and HisZ subunits.

It localises to the cytoplasm. It participates in amino-acid biosynthesis; L-histidine biosynthesis; L-histidine from 5-phospho-alpha-D-ribose 1-diphosphate: step 1/9. Functionally, required for the first step of histidine biosynthesis. May allow the feedback regulation of ATP phosphoribosyltransferase activity by histidine. The polypeptide is ATP phosphoribosyltransferase regulatory subunit (Bacillus thuringiensis subsp. konkukian (strain 97-27)).